We begin with the raw amino-acid sequence, 712 residues long: Ribosomal RNA large subunit methyltransferase K/L (712 aa).

In terms of domain architecture, THUMP spans 46 to 157; sequence GAYQALLHSR…REKLIVSLDL (112 aa).

It belongs to the methyltransferase superfamily. RlmKL family.

It is found in the cytoplasm. It carries out the reaction guanosine(2445) in 23S rRNA + S-adenosyl-L-methionine = N(2)-methylguanosine(2445) in 23S rRNA + S-adenosyl-L-homocysteine + H(+). The enzyme catalyses guanosine(2069) in 23S rRNA + S-adenosyl-L-methionine = N(2)-methylguanosine(2069) in 23S rRNA + S-adenosyl-L-homocysteine + H(+). Functionally, specifically methylates the guanine in position 2445 (m2G2445) and the guanine in position 2069 (m7G2069) of 23S rRNA. This Haemophilus ducreyi (strain 35000HP / ATCC 700724) protein is Ribosomal RNA large subunit methyltransferase K/L.